We begin with the raw amino-acid sequence, 461 residues long: Cysteine--tRNA ligase (461 aa).

Cys-29 contributes to the Zn(2+) binding site. The 'HIGH' region motif lies at 31 to 41 (MTVYDLCHLGH). Zn(2+)-binding residues include Cys-213, His-238, and Glu-242. Residues 270–274 (KMSKS) carry the 'KMSKS' region motif. Residue Lys-273 participates in ATP binding.

It belongs to the class-I aminoacyl-tRNA synthetase family. Monomer. Zn(2+) is required as a cofactor.

The protein localises to the cytoplasm. The catalysed reaction is tRNA(Cys) + L-cysteine + ATP = L-cysteinyl-tRNA(Cys) + AMP + diphosphate. The polypeptide is Cysteine--tRNA ligase (Delftia acidovorans (strain DSM 14801 / SPH-1)).